A 587-amino-acid chain; its full sequence is Protein SIX6OS1 (587 aa).

The interval 356 to 378 is disordered; the sequence is TPQKQSNSNQWSEKGDKDAEYGD. A compositionally biased stretch (polar residues) spans 357–367; sequence PQKQSNSNQWS. Positions 368-378 are enriched in basic and acidic residues; the sequence is EKGDKDAEYGD. At S439 the chain carries Phosphoserine. The interval 568–587 is disordered; that stretch reads SSSLKGFSSSSQNTTQFTFF.

In terms of assembly, interacts with SYCE1. Interacts with proteasome subunit PSMA8; to participate in meiosis progression during spermatogenesis. Highest expression in retina, skeletal muscle, testis and colon.

It localises to the chromosome. Meiotic protein that localizes to the central element of the synaptonemal complex and is required for chromosome synapsis during meiotic recombination. Required for the appropriate processing of intermediate recombination nodules before crossover formation. The sequence is that of Protein SIX6OS1 from Homo sapiens (Human).